Reading from the N-terminus, the 235-residue chain is Iron-sulfur cluster co-chaperone protein HscB (235 aa).

A divalent metal cation-binding residues include cysteine 41, cysteine 44, cysteine 58, and cysteine 61. The 73-residue stretch at 72 to 144 folds into the J domain; it reads DYFSLMDCNR…LSRGLYLLKL (73 aa).

The protein belongs to the HscB family. As to quaternary structure, interacts with ISCU and HSPA9 to form an iron-sulfur transfer complex. Interacts with SDHAF1 (via the first LYR motif); the interaction recruits the iron-sulfur transfer complex composed of HSC20, HSPA9 and ISCU and mediates the incorporation of iron-sulfur clusters into SDHB which also interacts with HSC20. Interacts with the cytoplasmic form of ISCU and with CIA complex member CIAO1 (via LYR motif). In terms of assembly, homodimer. Interacts with ISCU (cytoplasmic form); this interaction stabilizes the (Fe-S) clusters on ISCU. Interacts with the CIA complex member CIAO1 (via LYR motif). As to expression, expressed in lung, brain, stomach, spleen, ovary, testis, liver, muscle and heart.

It is found in the cytoplasm. It localises to the mitochondrion. The protein operates within cofactor biosynthesis; iron-sulfur cluster biosynthesis. Functionally, acts as a co-chaperone in iron-sulfur cluster assembly in mitochondria. Required for incorporation of iron-sulfur clusters into SDHB, the iron-sulfur protein subunit of succinate dehydrogenase that is involved in complex II of the mitochondrial electron transport chain. Recruited to SDHB by interaction with SDHAF1 which first binds SDHB and then recruits the iron-sulfur transfer complex formed by HSC20, HSPA9 and ISCU through direct binding to HSC20. Plays an essential role in hematopoiesis. Its function is as follows. Acts as a co-chaperone in iron-sulfur cluster assembly in the cytoplasm. Also mediates complex formation between components of the cytosolic iron-sulfur biogenesis pathway and the CIA targeting complex composed of CIAO1, DIPK1B/FAM69B and MMS19 by binding directly to the scaffold protein ISCU and to CIAO1. This facilitates iron-sulfur cluster insertion into a number of cytoplasmic and nuclear proteins including POLD1, ELP3, DPYD and PPAT. The protein is Iron-sulfur cluster co-chaperone protein HscB of Homo sapiens (Human).